The following is a 301-amino-acid chain: Putative two-component membrane permease complex subunit SMU_747c (301 aa).

Transmembrane regions (helical) follow at residues 15 to 35 (LAIFLSIIIEALPFILLGAIL), 60 to 80 (ILFGTFVGFIFPSCECGIVPI), 97 to 117 (FLATAPIINPIVLFATFSAFG), 124 to 144 (FLRLFGAIIVAISLGILLGFI), 188 to 208 (YLIFGSFVAASMQIYVPTRIL), 211 to 231 (IGHNPLTAILIMMLLAFILSL), 238 to 258 (FIGTSLLATFGVAPVVAFLLI), and 278 to 298 (FILQFVGTSSLIIIIYCLIVG).

This sequence belongs to the UPF0718 family. As to quaternary structure, interacts with SMU_746c.

It localises to the cell membrane. Its function is as follows. Could be part of a two-component membrane permease system responsible for amino acid transport under low pH. Involved in acidogenesis, biofilm formation and low-pH survival. The sequence is that of Putative two-component membrane permease complex subunit SMU_747c from Streptococcus mutans serotype c (strain ATCC 700610 / UA159).